Here is a 918-residue protein sequence, read N- to C-terminus: Protein translocase subunit SecA (918 aa).

ATP contacts are provided by residues Q87, G105–T109, and D494. Positions K863–V883 are enriched in basic and acidic residues. Residues K863–K918 form a disordered region.

The protein belongs to the SecA family. As to quaternary structure, monomer and homodimer. Part of the essential Sec protein translocation apparatus which comprises SecA, SecYEG and auxiliary proteins SecDF. Other proteins may also be involved.

The protein resides in the cell inner membrane. It is found in the cytoplasm. It catalyses the reaction ATP + H2O + cellular proteinSide 1 = ADP + phosphate + cellular proteinSide 2.. Functionally, part of the Sec protein translocase complex. Interacts with the SecYEG preprotein conducting channel. Has a central role in coupling the hydrolysis of ATP to the transfer of proteins into and across the cell membrane, serving as an ATP-driven molecular motor driving the stepwise translocation of polypeptide chains across the membrane. The polypeptide is Protein translocase subunit SecA (Leptospira biflexa serovar Patoc (strain Patoc 1 / Ames)).